The chain runs to 894 residues: Histone-lysine N-methyltransferase EZ2 (894 aa).

The span at 1–11 shows a compositional bias: low complexity; it reads MASSSKASDSS. Disordered stretches follow at residues 1-25, 395-447, and 491-513; these read MASS…GKDA, SSVS…KRQK, and KKTS…VGRQ. Residues 395–421 are compositionally biased toward polar residues; it reads SSVSAEESTTTPSADISETENVSSDLP. Basic residues predominate over residues 425 to 435; it reads LRKHKISKHGP. The segment covering 503–513 has biased composition (polar residues); that stretch reads PATTMENVGRQ. The region spanning 527 to 577 is the SANT domain; sequence TLSCWSALERDLYLKGIEIFGKNSCLIARNLLSGLKTCIEVANYMYNNGAA. In terms of domain architecture, CXC spans 627-731; sequence AGHPTVRKRT…SLGEPLARGD (105 aa). The SET domain occupies 746 to 861; sequence QRILLGRSDV…ASEELFYDYR (116 aa). Positions 867 to 894 are disordered; sequence APAWARRPEGSKKDEASVSHRRAHKVAR. The segment covering 872–884 has biased composition (basic and acidic residues); it reads RRPEGSKKDEASV. Basic residues predominate over residues 885 to 894; the sequence is SHRRAHKVAR.

The protein belongs to the class V-like SAM-binding methyltransferase superfamily. Histone-lysine methyltransferase family. EZ subfamily.

The protein localises to the nucleus. It carries out the reaction L-lysyl(27)-[histone H3] + 3 S-adenosyl-L-methionine = N(6),N(6),N(6)-trimethyl-L-lysyl(27)-[histone H3] + 3 S-adenosyl-L-homocysteine + 3 H(+). Functionally, polycomb group (PcG) protein. Catalytic subunit of some PcG multiprotein complex, which methylates 'Lys-27' of histone H3, leading to transcriptional repression of the affected target genes. PcG proteins are not required to initiate repression, but to maintain it during later stages of development. The chain is Histone-lysine N-methyltransferase EZ2 (EZ2) from Zea mays (Maize).